A 489-amino-acid chain; its full sequence is Trehalose-6-phosphate synthase (489 aa).

R22 provides a ligand contact to D-glucose 6-phosphate. 42–43 (GG) contacts UDP-alpha-D-glucose. 2 residues coordinate D-glucose 6-phosphate: Y94 and D148. UDP-alpha-D-glucose contacts are provided by R290 and K295. R328 contacts D-glucose 6-phosphate. Position 393 to 397 (393 to 397 (LVAKE)) interacts with UDP-alpha-D-glucose.

Belongs to the glycosyltransferase 20 family. In terms of assembly, homotetramer.

The enzyme catalyses ADP-alpha-D-glucose + D-glucose 6-phosphate = alpha,alpha-trehalose 6-phosphate + ADP + H(+). The catalysed reaction is CDP-alpha-D-glucose + D-glucose 6-phosphate = alpha,alpha-trehalose 6-phosphate + CDP + H(+). It catalyses the reaction GDP-alpha-D-glucose + D-glucose 6-phosphate = alpha,alpha-trehalose 6-phosphate + GDP + H(+). It carries out the reaction TDP-alpha-D-glucose + D-glucose 6-phosphate = 5-methyl-UDP + alpha,alpha-trehalose 6-phosphate + H(+). The enzyme catalyses D-glucose 6-phosphate + UDP-alpha-D-glucose = alpha,alpha-trehalose 6-phosphate + UDP + H(+). The protein operates within glycan biosynthesis; trehalose biosynthesis. Probably involved in the osmoprotection via the biosynthesis of trehalose and in the production of glycogen and alpha-glucan via the TreS-Pep2 branch involved in the biosynthesis of maltose-1-phosphate (M1P). Catalyzes the transfer of glucose from UDP-glucose (UDP-Glc) to D-glucose 6-phosphate (Glc-6-P) to form trehalose-6-phosphate. Probably also able to use ADP-Glc, CDP-Glc, GDP-Glc and TDP-Glc as glucosyl donors. The protein is Trehalose-6-phosphate synthase of Mycobacterium sp. (strain KMS).